A 119-amino-acid chain; its full sequence is Beta-2-microglobulin (119 aa).

A signal peptide spans 1–20; it reads MARFVAVALLVLLSLSGLEA. The region spanning 25–114 is the Ig-like C1-type domain; sequence PKIQVYSRHP…VTFSTPKTVK (90 aa). Cys45 and Cys100 are disulfide-bonded.

This sequence belongs to the beta-2-microglobulin family. Heterodimer of an alpha chain and a beta chain. Beta-2-microglobulin is the beta-chain of major histocompatibility complex class I molecules.

The protein localises to the secreted. Component of the class I major histocompatibility complex (MHC). Involved in the presentation of peptide antigens to the immune system. This is Beta-2-microglobulin (B2M) from Plecturocebus moloch (Dusky titi monkey).